Here is a 295-residue protein sequence, read N- to C-terminus: Aspartate carbamoyltransferase catalytic subunit (295 aa).

Carbamoyl phosphate-binding residues include arginine 49 and threonine 50. Lysine 77 contributes to the L-aspartate binding site. The carbamoyl phosphate site is built by arginine 99, histidine 127, and glutamine 130. L-aspartate is bound by residues arginine 161 and arginine 212. Residues glycine 251 and proline 252 each coordinate carbamoyl phosphate.

Belongs to the aspartate/ornithine carbamoyltransferase superfamily. ATCase family. In terms of assembly, heterododecamer (2C3:3R2) of six catalytic PyrB chains organized as two trimers (C3), and six regulatory PyrI chains organized as three dimers (R2).

The enzyme catalyses carbamoyl phosphate + L-aspartate = N-carbamoyl-L-aspartate + phosphate + H(+). It participates in pyrimidine metabolism; UMP biosynthesis via de novo pathway; (S)-dihydroorotate from bicarbonate: step 2/3. Catalyzes the condensation of carbamoyl phosphate and aspartate to form carbamoyl aspartate and inorganic phosphate, the committed step in the de novo pyrimidine nucleotide biosynthesis pathway. This chain is Aspartate carbamoyltransferase catalytic subunit, found in Campylobacter jejuni (strain RM1221).